The chain runs to 114 residues: Protein D2 (114 aa).

It belongs to the phosphatidylethanolamine-binding protein family.

This Onchocerca volvulus protein is Protein D2 (D2).